Consider the following 365-residue polypeptide: Aminomethyltransferase (365 aa).

The protein belongs to the GcvT family. As to quaternary structure, the glycine cleavage system is composed of four proteins: P, T, L and H.

The catalysed reaction is N(6)-[(R)-S(8)-aminomethyldihydrolipoyl]-L-lysyl-[protein] + (6S)-5,6,7,8-tetrahydrofolate = N(6)-[(R)-dihydrolipoyl]-L-lysyl-[protein] + (6R)-5,10-methylene-5,6,7,8-tetrahydrofolate + NH4(+). In terms of biological role, the glycine cleavage system catalyzes the degradation of glycine. This is Aminomethyltransferase from Chlorobaculum tepidum (strain ATCC 49652 / DSM 12025 / NBRC 103806 / TLS) (Chlorobium tepidum).